We begin with the raw amino-acid sequence, 81 residues long: Photosystem I iron-sulfur center (81 aa).

4Fe-4S ferredoxin-type domains are found at residues 2-31 (SHSVKIYDTCIGCTHCVRACPTDVLEMIPW) and 39-68 (IASAPRTEDCVGCKRCESACPTDFLSVRVY). [4Fe-4S] cluster contacts are provided by C11, C14, C17, C21, C48, C51, C54, and C58.

The eukaryotic PSI reaction center is composed of at least 11 subunits. [4Fe-4S] cluster serves as cofactor.

It localises to the plastid. The protein localises to the chloroplast thylakoid membrane. It carries out the reaction reduced [plastocyanin] + hnu + oxidized [2Fe-2S]-[ferredoxin] = oxidized [plastocyanin] + reduced [2Fe-2S]-[ferredoxin]. Apoprotein for the two 4Fe-4S centers FA and FB of photosystem I (PSI); essential for photochemical activity. FB is the terminal electron acceptor of PSI, donating electrons to ferredoxin. The C-terminus interacts with PsaA/B/D and helps assemble the protein into the PSI complex. Required for binding of PsaD and PsaE to PSI. PSI is a plastocyanin-ferredoxin oxidoreductase, converting photonic excitation into a charge separation, which transfers an electron from the donor P700 chlorophyll pair to the spectroscopically characterized acceptors A0, A1, FX, FA and FB in turn. The protein is Photosystem I iron-sulfur center of Zea mays (Maize).